The primary structure comprises 364 residues: DNA replication and repair protein RecF (364 aa).

23 to 30 (GPNGIGKS) serves as a coordination point for ATP.

Belongs to the RecF family.

Its subcellular location is the cytoplasm. The RecF protein is involved in DNA metabolism; it is required for DNA replication and normal SOS inducibility. RecF binds preferentially to single-stranded, linear DNA. It also seems to bind ATP. The protein is DNA replication and repair protein RecF of Synechococcus sp. (strain CC9605).